A 258-amino-acid polypeptide reads, in one-letter code: Thrombin-like enzyme saxthrombin (258 aa).

The signal sequence occupies residues 1–18; it reads MVLIRVLANLLILQLSYA. Residues 19 to 24 constitute a propeptide that is removed on maturation; the sequence is QKSSEL. One can recognise a Peptidase S1 domain in the interval 25–249; sequence VIGGDECNIN…YNHWIQSIIA (225 aa). Cystine bridges form between C31–C163, C50–C66, C98–C256, C142–C210, C174–C189, and C200–C225. N44 carries an N-linked (GlcNAc...) asparagine glycan. Catalysis depends on charge relay system residues H65 and D110. S204 acts as the Charge relay system in catalysis. N-linked (GlcNAc...) asparagine glycosylation occurs at N251.

Belongs to the peptidase S1 family. Snake venom subfamily. As to quaternary structure, monomer. In terms of tissue distribution, expressed by the venom gland.

The protein localises to the secreted. Thrombin-like snake venom serine protease that shows strong blood coagulation activity in vitro. This Gloydius intermedius (Central Asian pit viper) protein is Thrombin-like enzyme saxthrombin.